The chain runs to 327 residues: WRKY transcription factor WRKY76 (327 aa).

The stretch at 56–76 forms a coiled coil; that stretch reads AKIVEAKVTQMSEENRRLTEV. The disordered stretch occupies residues 87–135; it reads RLGLDGSASPPRPVSPLSGKKRSRESMETANSCDANSNRHQGGDADHAE. The short motif at 106–112 is the Nuclear localization signal element; it reads KKRSRES. Over residues 114–126 the composition is skewed to polar residues; that stretch reads ETANSCDANSNRH. Residues 160 to 226 constitute a DNA-binding region (WRKY); the sequence is DTSLVVKDGY…YEGEHNHPHP (67 aa).

The protein belongs to the WRKY group II-a family.

It localises to the nucleus. In terms of biological role, transcription repressor. Interacts specifically with the W box (5'-(T)TGAC[CT]-3'), a frequently occurring elicitor-responsive cis-acting element. Regulates, probably indirectly, the activation of defense-related genes during defense response. Modulates plant innate immunity against X.oryzae pv. oryzae (Xoo). This is WRKY transcription factor WRKY76 from Oryza sativa subsp. japonica (Rice).